Consider the following 58-residue polypeptide: MVYHNSMCTYLFYNKIGFGLDYQLSVYLGLATTIVCIVLFFTMLKPLGTRDEEAYINN.

Residues 24-44 (LSVYLGLATTIVCIVLFFTML) form a helical membrane-spanning segment.

It localises to the membrane. This is an uncharacterized protein from Haemophilus influenzae (strain ATCC 51907 / DSM 11121 / KW20 / Rd).